The sequence spans 558 residues: EF-hand and coiled-coil domain-containing protein 1 (558 aa).

One can recognise an EF-hand domain in the interval 43–78; it reads GLDQYLQEVFHHLDCRGAGRLPRADFRALCAVLGLN. Positions 161-170 are enriched in basic residues; that stretch reads LRRPRRRRRP. Disordered regions lie at residues 161 to 183 and 304 to 395; these read LRRPRRRRRPGSPSLHGGAYGER and RSEG…QPSG. Coiled coils occupy residues 179–304 and 453–495; these read AYGE…RGYR and VEAE…LNIS.

The chain is EF-hand and coiled-coil domain-containing protein 1 (Efcc1) from Mus musculus (Mouse).